Reading from the N-terminus, the 256-residue chain is MATVDLNADMGESFGSWKAGDDESLLGIVTSANVACGFHAGDAVVMGQTCKAAAEHGVCIGAHVSYRDLAGFGRNFIDVDPGRLRDEVIYQLSALRGIAAVHGASVRYVKPHGALYNTIVHHQAQAKAVVEAIDAVNSATGADMAILGLPGALVLDLAEQQGVRTLSEVFADRAYNPDGTLVSRRQEGSVLHDPGEVAERVVTLVTQGSVTAIDGTKVPIKADSVCVHGDTPGAVAMATAVRDRLASTGIELRAAA.

It belongs to the LamB/PxpA family. In terms of assembly, forms a complex composed of PxpA, PxpB and PxpC.

The enzyme catalyses 5-oxo-L-proline + ATP + 2 H2O = L-glutamate + ADP + phosphate + H(+). Its function is as follows. Catalyzes the cleavage of 5-oxoproline to form L-glutamate coupled to the hydrolysis of ATP to ADP and inorganic phosphate. In Cutibacterium acnes (strain DSM 16379 / KPA171202) (Propionibacterium acnes), this protein is 5-oxoprolinase subunit A.